Reading from the N-terminus, the 256-residue chain is Lysosomal membrane ascorbate-dependent ferrireductase CYB561A3 (256 aa).

Topologically, residues 1-3 (MAS) are cytoplasmic. A helical membrane pass occupies residues 4 to 24 (GWFYMSCMVLGSLGSMCILFT). A Cytochrome b561 domain is found at 12-219 (VLGSLGSMCI…FGLLVLYILL (208 aa)). Residues 25-40 (TYWMQYWRGGFAWDGT) lie on the Lumenal side of the membrane. Residues 41-61 (VLMFNWHPVLMVSGMVVLYGA) traverse the membrane as a helical segment. Heme b is bound by residues His-47 and Arg-67. Topologically, residues 62 to 83 (ASLVYRLPASWVGPKLPWKVLH) are cytoplasmic. Residues Lys-76 and Lys-80 each coordinate L-ascorbate. His-83 is a heme b binding site. A helical membrane pass occupies residues 84 to 104 (AALHLLAFTVTVVGLTAVFGF). The Lumenal portion of the chain corresponds to 105-119 (HNHSKITHLYSLHSW). Asn-106 carries N-linked (GlcNAc...) asparagine glycosylation. Heme b-binding positions include 112–115 (HLYS) and His-117. The chain crosses the membrane as a helical span at residues 120-140 (LGITTVALFACQWFLGFAVFL). Residues 141-154 (LPWASQWLRSLLKP) lie on the Cytoplasmic side of the membrane. Position 149 (Arg-149) interacts with L-ascorbate. A helical transmembrane segment spans residues 155-175 (VHVFFGACILSLSIASVISGI). Residues His-156 and Glu-177 each coordinate heme b. Residues 176 to 202 (NEKLFFVLKNATRPYSSLPGEAVFANS) lie on the Lumenal side of the membrane. Residues 203-223 (TGILVVSFGLLVLYILLASSW) traverse the membrane as a helical segment. Arg-224 contacts heme b. Over 224 to 256 (RRPDPGALTDRQVWLLVSHYRWDKAKKACFAPC) the chain is Cytoplasmic.

As to quaternary structure, homodimer. Requires heme b as cofactor. Post-translationally, N-glycosylated.

It is found in the late endosome membrane. It localises to the lysosome membrane. It catalyses the reaction Fe(3+)(out) + L-ascorbate(in) = monodehydro-L-ascorbate radical(in) + Fe(2+)(out) + H(+). Transmembrane reductase that uses ascorbate as an electron donor in the cytoplasm and transfers electrons across membranes to reduce iron cations Fe(3+) into Fe(2+) in the lumen of the late endosome and lysosome. Reduced iron can then be extruded from the late endosome and lysosome to the cytoplasm by divalent metal-specific transporters. It is therefore most probably involved in endosomal and lysosomal cellular iron homeostasis. The sequence is that of Lysosomal membrane ascorbate-dependent ferrireductase CYB561A3 from Rattus norvegicus (Rat).